Reading from the N-terminus, the 158-residue chain is Developmental pluripotency-associated protein 3 (158 aa).

2 disordered regions span residues 1–38 and 54–78; these read MDEP…EILQ and SAKP…VENR. Over residues 26 to 35 the composition is skewed to acidic residues; the sequence is DEGDSPDDSE. Over residues 58–68 the composition is skewed to basic residues; sequence TKYHRRQRVRL.

The protein localises to the nucleus. The protein resides in the cytoplasm. In terms of biological role, primordial germ cell (PGCs)-specific protein involved in epigenetic chromatin reprogramming in the zygote following fertilization. In zygotes, DNA demethylation occurs selectively in the paternal pronucleus before the first cell division, while the adjacent maternal pronucleus and certain paternally-imprinted loci are protected from this process. Participates in protection of DNA methylation in the maternal pronucleus by preventing conversion of 5mC to 5hmC: specifically recognizes and binds histone H3 dimethylated at 'Lys-9' (H3K9me2) on maternal genome, and protects maternal genome from TET3-mediated conversion to 5hmC and subsequent DNA demethylation. Does not bind paternal chromatin, which is mainly packed into protamine and does not contain much H3K9me2 mark. Also protects imprinted loci that are marked with H3K9me2 in mature sperm from DNA demethylation in early embryogenesis. May be important for the totipotent/pluripotent states continuing through preimplantation development. Also involved in chromatin condensation in oocytogenesis. This Rattus norvegicus (Rat) protein is Developmental pluripotency-associated protein 3 (Dppa3).